Here is a 220-residue protein sequence, read N- to C-terminus: dITP/XTP pyrophosphatase (220 aa).

A substrate-binding site is contributed by 13–18 (SHNAGK). Asp45 and Asp74 together coordinate Mg(2+). Asp74 (proton acceptor) is an active-site residue. Substrate-binding positions include Ser75, 163-166 (FGYD), Lys186, and 199-200 (HR).

It belongs to the HAM1 NTPase family. Homodimer. Mg(2+) serves as cofactor.

It catalyses the reaction XTP + H2O = XMP + diphosphate + H(+). The enzyme catalyses dITP + H2O = dIMP + diphosphate + H(+). It carries out the reaction ITP + H2O = IMP + diphosphate + H(+). In terms of biological role, pyrophosphatase that catalyzes the hydrolysis of nucleoside triphosphates to their monophosphate derivatives, with a high preference for the non-canonical purine nucleotides XTP (xanthosine triphosphate), dITP (deoxyinosine triphosphate) and ITP. Seems to function as a house-cleaning enzyme that removes non-canonical purine nucleotides from the nucleotide pool, thus preventing their incorporation into DNA/RNA and avoiding chromosomal lesions. The polypeptide is dITP/XTP pyrophosphatase (Mesorhizobium japonicum (strain LMG 29417 / CECT 9101 / MAFF 303099) (Mesorhizobium loti (strain MAFF 303099))).